We begin with the raw amino-acid sequence, 290 residues long: 4-diphosphocytidyl-2-C-methyl-D-erythritol kinase (290 aa).

Residue K20 is part of the active site. 104-114 (PMGGGLGGGSS) is an ATP binding site. The active site involves D146.

This sequence belongs to the GHMP kinase family. IspE subfamily.

It carries out the reaction 4-CDP-2-C-methyl-D-erythritol + ATP = 4-CDP-2-C-methyl-D-erythritol 2-phosphate + ADP + H(+). It participates in isoprenoid biosynthesis; isopentenyl diphosphate biosynthesis via DXP pathway; isopentenyl diphosphate from 1-deoxy-D-xylulose 5-phosphate: step 3/6. Functionally, catalyzes the phosphorylation of the position 2 hydroxy group of 4-diphosphocytidyl-2C-methyl-D-erythritol. The chain is 4-diphosphocytidyl-2-C-methyl-D-erythritol kinase from Shewanella frigidimarina (strain NCIMB 400).